The primary structure comprises 443 residues: Thymidine phosphorylase (443 aa).

The protein belongs to the thymidine/pyrimidine-nucleoside phosphorylase family. Homodimer.

The catalysed reaction is thymidine + phosphate = 2-deoxy-alpha-D-ribose 1-phosphate + thymine. Its pathway is pyrimidine metabolism; dTMP biosynthesis via salvage pathway; dTMP from thymine: step 1/2. The enzymes which catalyze the reversible phosphorolysis of pyrimidine nucleosides are involved in the degradation of these compounds and in their utilization as carbon and energy sources, or in the rescue of pyrimidine bases for nucleotide synthesis. In Shewanella baltica (strain OS185), this protein is Thymidine phosphorylase.